The sequence spans 862 residues: Protein SEY1 (862 aa).

Residues 1–743 (MASNGHFSSV…KRSAIGGITQ (743 aa)) are Cytoplasmic-facing. The 254-residue stretch at 48–301 (GFNYHLISVF…IPADGFAVYA (254 aa)) folds into the GB1/RHD3-type G domain. Position 58–65 (58–65 (GSQSTGKS)) interacts with GTP. Residues 476–500 (SDYKQELSLFQKDLEKISSQLRKDE) adopt a coiled-coil conformation. The helical transmembrane segment at 744–764 (VPLYFYGLLLALGWNEIIAVL) threads the bilayer. Residues 765–767 (RNP) lie on the Lumenal side of the membrane. Residues 768-788 (IYFIFLLLIGVGAYVTFRLNL) form a helical membrane-spanning segment. Residues 789–862 (WGPMINMAEA…TSDDDNDDDL (74 aa)) are Cytoplasmic-facing. A disordered region spans residues 818–862 (SDSGRQAMAMSGRNARGTEEYEMSSNLKSKGRRTDTSDDDNDDDL).

Belongs to the TRAFAC class dynamin-like GTPase superfamily. GB1/RHD3 GTPase family. RHD3 subfamily.

It localises to the endoplasmic reticulum membrane. Cooperates with the reticulon proteins and tubule-shaping DP1 family proteins to generate and maintain the structure of the tubular endoplasmic reticulum network. Has GTPase activity, which is required for its function in ER organization. The polypeptide is Protein SEY1 (Arthroderma otae (strain ATCC MYA-4605 / CBS 113480) (Microsporum canis)).